The following is a 270-amino-acid chain: DNA adenine methylase (270 aa).

Residues tryptophan 10, lysine 14, aspartate 54, and aspartate 181 each contribute to the S-adenosyl-L-methionine site.

Belongs to the N(4)/N(6)-methyltransferase family.

It carries out the reaction a 2'-deoxyadenosine in DNA + S-adenosyl-L-methionine = an N(6)-methyl-2'-deoxyadenosine in DNA + S-adenosyl-L-homocysteine + H(+). In terms of biological role, an alpha subtype methylase, recognizes the double-stranded sequence 5'-GATC-3' and methylates A-2. Overexpression leads to hypermutability. May be involved in methyl-directed DNA mismatch repair, initiation of chromosome replication and gene expression. This chain is DNA adenine methylase, found in Serratia marcescens.